Consider the following 358-residue polypeptide: Putative cell-type specific agglutination protein pfl7 (358 aa).

The signal sequence occupies residues 1–23; sequence MNSLKSLCLKCIVTLCLLVNAFA. N-linked (GlcNAc...) asparagine glycosylation is found at Asn-67, Asn-88, Asn-112, and Asn-136. A disordered region spans residues 90–144; it reads TISTSSSTPITASVPTSSSILSNSTIPTTSPVPTTSSTPTSSSILSNSTIPSSSS. 2 consecutive repeat copies span residues 148–180 and 181–218. A 2 X 36 AA approximate tandem repeats region spans residues 148–218; the sequence is STITTTIISG…GLVEVITPSC (71 aa). In terms of domain architecture, DIPSY spans 207-358; it reads QSGLVEVITP…RADDVILVAY (152 aa). N-linked (GlcNAc...) asparagine glycosylation is found at Asn-245 and Asn-305.

The protein belongs to the mam3/map4 family.

The protein resides in the cell surface. May be involved in agglutination during conjugation or other aspects of colony formation. Induces flocculation when overexpressed. In Schizosaccharomyces pombe (strain 972 / ATCC 24843) (Fission yeast), this protein is Putative cell-type specific agglutination protein pfl7.